The sequence spans 190 residues: Shikimate kinase (190 aa).

Position 26–31 (26–31 (GSGKST)) interacts with ATP. Residue S30 participates in Mg(2+) binding. Positions 48, 72, and 94 each coordinate substrate. R133 contributes to the ATP binding site. A substrate-binding site is contributed by R152.

This sequence belongs to the shikimate kinase family. Monomer. The cofactor is Mg(2+).

The protein resides in the cytoplasm. It catalyses the reaction shikimate + ATP = 3-phosphoshikimate + ADP + H(+). It participates in metabolic intermediate biosynthesis; chorismate biosynthesis; chorismate from D-erythrose 4-phosphate and phosphoenolpyruvate: step 5/7. Functionally, catalyzes the specific phosphorylation of the 3-hydroxyl group of shikimic acid using ATP as a cosubstrate. The sequence is that of Shikimate kinase from Prochlorococcus marinus (strain SARG / CCMP1375 / SS120).